An 858-amino-acid polypeptide reads, in one-letter code: Gamma-secretase-activating protein (858 aa).

It belongs to the GSAP family. As to quaternary structure, interacts with APP; specifically interacts with the CTF-alpha product of APP. Interacts with the gamma-secretase complex. The protein is first synthesized as a holoprotein form of 98 kDa and rapidly processed into the gamma-secretase-activating protein 16 kDa C-terminal form, which constitutes the predominant form.

The protein localises to the golgi apparatus. The protein resides in the trans-Golgi network. Its function is as follows. Regulator of gamma-secretase activity, which specifically activates the production of amyloid-beta protein (amyloid-beta protein 40 and amyloid-beta protein 42), without affecting the cleavage of other gamma-secretase targets such has Notch. The gamma-secretase complex is an endoprotease complex that catalyzes the intramembrane cleavage of integral membrane proteins such as Notch receptors and APP (amyloid-beta precursor protein). Specifically promotes the gamma-cleavage of APP CTF-alpha (also named APP-CTF) by the gamma-secretase complex to generate amyloid-beta, while it reduces the epsilon-cleavage of APP CTF-alpha, leading to a low production of AICD. This is Gamma-secretase-activating protein (Gsap) from Mus musculus (Mouse).